A 312-amino-acid polypeptide reads, in one-letter code: Ribosomal RNA small subunit methyltransferase H (312 aa).

Residues 35 to 37, Asp-55, Phe-79, Asp-101, and Gln-108 contribute to the S-adenosyl-L-methionine site; that span reads GGH.

This sequence belongs to the methyltransferase superfamily. RsmH family.

Its subcellular location is the cytoplasm. It carries out the reaction cytidine(1402) in 16S rRNA + S-adenosyl-L-methionine = N(4)-methylcytidine(1402) in 16S rRNA + S-adenosyl-L-homocysteine + H(+). Its function is as follows. Specifically methylates the N4 position of cytidine in position 1402 (C1402) of 16S rRNA. The polypeptide is Ribosomal RNA small subunit methyltransferase H (Buchnera aphidicola subsp. Acyrthosiphon pisum (strain APS) (Acyrthosiphon pisum symbiotic bacterium)).